Here is a 227-residue protein sequence, read N- to C-terminus: Cytochrome c oxidase subunit 2 (227 aa).

Residues 1 to 14 are Mitochondrial intermembrane-facing; it reads MAYPLQLGLQDATS. Residues 15-45 traverse the membrane as a helical segment; that stretch reads PIMEELTSFHDHTLMIVFLISSLVLYIISSM. The Mitochondrial matrix portion of the chain corresponds to 46–59; that stretch reads LTTKMTHTNTMDAQ. The chain crosses the membrane as a helical span at residues 60–87; the sequence is GVETIWTILPAAILVLIALPSLRILYMM. The Mitochondrial intermembrane segment spans residues 88-227; sequence DEINNPALTV…HFENWSASMI (140 aa). Cu cation contacts are provided by H161, C196, E198, C200, H204, and M207. Residue E198 participates in Mg(2+) binding.

The protein belongs to the cytochrome c oxidase subunit 2 family. In terms of assembly, component of the cytochrome c oxidase (complex IV, CIV), a multisubunit enzyme composed of 14 subunits. The complex is composed of a catalytic core of 3 subunits MT-CO1, MT-CO2 and MT-CO3, encoded in the mitochondrial DNA, and 11 supernumerary subunits COX4I, COX5A, COX5B, COX6A, COX6B, COX6C, COX7A, COX7B, COX7C, COX8 and NDUFA4, which are encoded in the nuclear genome. The complex exists as a monomer or a dimer and forms supercomplexes (SCs) in the inner mitochondrial membrane with NADH-ubiquinone oxidoreductase (complex I, CI) and ubiquinol-cytochrome c oxidoreductase (cytochrome b-c1 complex, complex III, CIII), resulting in different assemblies (supercomplex SCI(1)III(2)IV(1) and megacomplex MCI(2)III(2)IV(2)). Found in a complex with TMEM177, COA6, COX18, COX20, SCO1 and SCO2. Interacts with TMEM177 in a COX20-dependent manner. Interacts with COX20. Interacts with COX16. Cu cation is required as a cofactor.

It is found in the mitochondrion inner membrane. The catalysed reaction is 4 Fe(II)-[cytochrome c] + O2 + 8 H(+)(in) = 4 Fe(III)-[cytochrome c] + 2 H2O + 4 H(+)(out). Its function is as follows. Component of the cytochrome c oxidase, the last enzyme in the mitochondrial electron transport chain which drives oxidative phosphorylation. The respiratory chain contains 3 multisubunit complexes succinate dehydrogenase (complex II, CII), ubiquinol-cytochrome c oxidoreductase (cytochrome b-c1 complex, complex III, CIII) and cytochrome c oxidase (complex IV, CIV), that cooperate to transfer electrons derived from NADH and succinate to molecular oxygen, creating an electrochemical gradient over the inner membrane that drives transmembrane transport and the ATP synthase. Cytochrome c oxidase is the component of the respiratory chain that catalyzes the reduction of oxygen to water. Electrons originating from reduced cytochrome c in the intermembrane space (IMS) are transferred via the dinuclear copper A center (CU(A)) of subunit 2 and heme A of subunit 1 to the active site in subunit 1, a binuclear center (BNC) formed by heme A3 and copper B (CU(B)). The BNC reduces molecular oxygen to 2 water molecules using 4 electrons from cytochrome c in the IMS and 4 protons from the mitochondrial matrix. The protein is Cytochrome c oxidase subunit 2 (MT-CO2) of Acomys ignitus (Fiery spiny mouse).